The chain runs to 232 residues: Vesicle transport through interaction with t-SNAREs homolog 1B (232 aa).

At alanine 2 the chain carries N-acetylalanine. Interaction with CLINT1 regions lie at residues 2 to 23 (AASAASSEHFEKLHEIFRGLLE) and 69 to 73 (APLTF). Topologically, residues 2-208 (AASAASSEHF…SRKVITNKLL (207 aa)) are cytoplasmic. Positions 36–98 (AGTEEKKKLV…AKLHREVRST (63 aa)) form a coiled coil. Arginine 107 is modified (omega-N-methylarginine). Position 138 is a phosphoserine (serine 138). Residues 160-201 (GTEIIEELGEQRDQLERTKSRLVNTNENLSKSRKILRSMSRK) adopt a coiled-coil conformation. A helical; Anchor for type IV membrane protein transmembrane segment spans residues 209 to 229 (LSVIILLELAILVGLVYYKFF). Topologically, residues 230 to 232 (RHH) are vesicular.

Belongs to the VTI1 family. In terms of assembly, forms a SNARE complex with STX7, STX8 and VAMP8 which functions in the homotypic fusion of late endosomes. Component of the SNARE complex composed of STX7, STX8, VAMP7 and VIT1B that is required for heterotypic fusion of late endosomes with lysosomes. May interact with STX17. Interacts with CLINT1. In terms of tissue distribution, broadly expressed.

The protein resides in the early endosome membrane. Its subcellular location is the late endosome membrane. It is found in the lysosome membrane. The protein localises to the cytoplasmic granule. It localises to the recycling endosome membrane. Its function is as follows. V-SNARE that mediates vesicle transport pathways through interactions with t-SNAREs on the target membrane. These interactions are proposed to mediate aspects of the specificity of vesicle trafficking and to promote fusion of the lipid bilayers. In Mus musculus (Mouse), this protein is Vesicle transport through interaction with t-SNAREs homolog 1B (Vti1b).